Reading from the N-terminus, the 304-residue chain is Taste receptor type 2 member 4 (304 aa).

Residues 1–10 (MLWELYAFVF) are Extracellular-facing. The helical transmembrane segment at 11 to 31 (AASVVFNFVGIVANLFIIVII) threads the bilayer. The Cytoplasmic segment spans residues 32-46 (SKTWVKSHKISSSDK). Residues 47–67 (ILFSLAITRFLTLGLFLLNTV) form a helical membrane-spanning segment. At 68–80 (YIATNTGRSVYFS) the chain is on the extracellular side. Residues 81-101 (TFFLLCWKFLDSNSLWLVTFL) form a helical membrane-spanning segment. Topologically, residues 102–128 (NCLYCVKITHFQHPVFLLLKRTVSMKT) are cytoplasmic. The helical transmembrane segment at 129-149 (TSLLLACLLISAFTTLLYFVL) threads the bilayer. The Extracellular segment spans residues 150-171 (TQISRFPEHIIGRNDTLFDVSD). An N-linked (GlcNAc...) asparagine glycan is attached at asparagine 163. A helical transmembrane segment spans residues 172–192 (GILTLAASLILSSLLQFLLNV). Residues 193-229 (TFASLLIHSLRRHVQKMQRNRSSFWNPQTEAHVGAMR) lie on the Cytoplasmic side of the membrane. The chain crosses the membrane as a helical span at residues 230-250 (LMICFLVLYIPYSIAALLYFP). Over 251 to 260 (SYMRKNLRAQ) the chain is Extracellular. A helical membrane pass occupies residues 261 to 281 (AACMIITAAYPPGHSILLIIT). At 282–304 (HHKLKAKAKKICCFYKLRDFVSN) the chain is on the cytoplasmic side.

It belongs to the G-protein coupled receptor T2R family. Expressed in tongue, stomach and duodenum.

It localises to the membrane. The protein localises to the cell projection. Its subcellular location is the cilium membrane. Its function is as follows. Gustducin-coupled receptor implicated in the perception of bitter compounds in the oral cavity and the gastrointestinal tract. Signals through PLCB2 and the calcium-regulated cation channel TRPM5. In airway epithelial cells, binding of denatonium increases the intracellular calcium ion concentration and stimulates ciliary beat frequency. This Rattus norvegicus (Rat) protein is Taste receptor type 2 member 4.